The following is a 135-amino-acid chain: Large ribosomal subunit protein uL22c (135 aa).

Belongs to the universal ribosomal protein uL22 family. As to quaternary structure, part of the 50S ribosomal subunit.

The protein localises to the plastid. Its function is as follows. This protein binds specifically to 23S rRNA. Functionally, the globular domain of the protein is located near the polypeptide exit tunnel on the outside of the subunit, while an extended beta-hairpin is found that lines the wall of the exit tunnel in the center of the 70S ribosome. This chain is Large ribosomal subunit protein uL22c (rpl22), found in Cuscuta reflexa (Southern Asian dodder).